A 464-amino-acid chain; its full sequence is Rab GDP-dissociation inhibitor (464 aa).

This sequence belongs to the Rab GDI family. As to quaternary structure, interacts with the GDP-bound form of Rab GTPase YPT7.

Regulates the GDP/GTP exchange reaction of YPT7 by inhibiting the dissociation of GDP from it, and the subsequent binding of GTP to YTP7. The polypeptide is Rab GDP-dissociation inhibitor (GDI1) (Pyricularia oryzae (strain 70-15 / ATCC MYA-4617 / FGSC 8958) (Rice blast fungus)).